The sequence spans 61 residues: Large ribosomal subunit protein uL30 (61 aa).

This sequence belongs to the universal ribosomal protein uL30 family. In terms of assembly, part of the 50S ribosomal subunit.

This chain is Large ribosomal subunit protein uL30, found in Dichelobacter nodosus (strain VCS1703A).